Reading from the N-terminus, the 93-residue chain is MPKNAVVILRYGPYSAAGLPVEHHTFRLQGLQAVLAIDGHEVILEKIEDWNVVELMVNEEVIFHCNIKDLEFGGDGKLDPLCEKARIAVLNAY.

This sequence belongs to the UPF0728 family.

The chain is UPF0728 protein C10orf53 (C10orf53) from Homo sapiens (Human).